The chain runs to 314 residues: BTB/POZ domain-containing adapter for CUL3-mediated RhoA degradation protein 2 (314 aa).

A BTB domain is found at 32–100 (KYVRLNVGGS…LRDDTIALPK (69 aa)).

It belongs to the BACURD family. In terms of assembly, component of the BCR(TNFAIP1) E3 ubiquitin ligase complex, at least composed of CUL3, TNFAIP1/BACURD2 and RBX1.

The protein resides in the cytoplasm. It localises to the nucleus. It is found in the endosome. The protein operates within protein modification; protein ubiquitination. Its function is as follows. Substrate-specific adapter of a BCR (BTB-CUL3-RBX1) E3 ubiquitin-protein ligase complex involved in regulation of cytoskeleton structure. The BCR(TNFAIP1) E3 ubiquitin ligase complex mediates the ubiquitination of target proteins, leading to their degradation by the proteasome. This chain is BTB/POZ domain-containing adapter for CUL3-mediated RhoA degradation protein 2 (TNFAIP1), found in Gallus gallus (Chicken).